Here is a 123-residue protein sequence, read N- to C-terminus: Large ribosomal subunit protein uL18 (123 aa).

This sequence belongs to the universal ribosomal protein uL18 family. In terms of assembly, part of the 50S ribosomal subunit; part of the 5S rRNA/L5/L18/L25 subcomplex. Contacts the 5S and 23S rRNAs.

Functionally, this is one of the proteins that bind and probably mediate the attachment of the 5S RNA into the large ribosomal subunit, where it forms part of the central protuberance. In Desulforudis audaxviator (strain MP104C), this protein is Large ribosomal subunit protein uL18.